Consider the following 141-residue polypeptide: Nucleoside diphosphate kinase (141 aa).

Lys-11, Phe-59, Arg-87, Thr-93, Arg-104, and Asn-114 together coordinate ATP. The Pros-phosphohistidine intermediate role is filled by His-117.

This sequence belongs to the NDK family. As to quaternary structure, homotetramer. Mg(2+) serves as cofactor.

The protein localises to the cytoplasm. The enzyme catalyses a 2'-deoxyribonucleoside 5'-diphosphate + ATP = a 2'-deoxyribonucleoside 5'-triphosphate + ADP. It carries out the reaction a ribonucleoside 5'-diphosphate + ATP = a ribonucleoside 5'-triphosphate + ADP. Major role in the synthesis of nucleoside triphosphates other than ATP. The ATP gamma phosphate is transferred to the NDP beta phosphate via a ping-pong mechanism, using a phosphorylated active-site intermediate. The chain is Nucleoside diphosphate kinase from Nitrosomonas eutropha (strain DSM 101675 / C91 / Nm57).